Consider the following 824-residue polypeptide: C-Jun-amino-terminal kinase-interacting protein 2 (824 aa).

4 disordered regions span residues 1 to 28 (MADR…QDIS), 40 to 160 (ITDD…GFDL), 172 to 349 (CSPA…DSPW), and 361 to 501 (EGSS…APRD). A compositionally biased stretch (acidic residues) spans 77 to 110 (DFQEFEMIDDNEEEDDEDEEEEEEEEEGDGEGQE). The tract at residues 110–275 (EGGDPGSEAP…RMISSISETE (166 aa)) is JNK-binding domain (JBD). Over residues 141-156 (LRLTTLGAQDSLNNNG) the composition is skewed to polar residues. Residues 239 to 498 (GRGGRRSSQE…PGGRGTGPSA (260 aa)) are necessary for interaction with FGF13. Residues Ser-254, Ser-302, and Ser-305 each carry the phosphoserine modification. Over residues 268–305 (ISSISETELELSSDGGSSSSGRSSHLTNSIEEASSPAS) the composition is skewed to low complexity. Residues 327-346 (TNSEYESGSESEPDLSEDAD) are compositionally biased toward acidic residues. The segment covering 416–432 (APPPPAPAAPRPGPAQP) has biased composition (pro residues). Residues 451 to 467 (AAPGRAARPGRACSAAC) show a composition bias toward low complexity. Positions 468–484 (SEEEDEEDDEEEEDAED) are enriched in acidic residues. The SH3 domain maps to 604-665 (EREQTHRAVF…PAFYAHAVPG (62 aa)). Residues 677–813 (PCWVERFDVQ…FLEYYQEHLA (137 aa)) form the PID domain.

Belongs to the JIP scaffold family. In terms of assembly, forms homo- or heterooligomeric complexes. Binds specific components of the JNK signaling pathway namely JNK1, JNK2, JNK3, MAP2K7, MAP3K10, MAP3K11, MAP3K12 and MAPK13. Also binds the proline-rich domain-containing splice variant of apolipoprotein E receptor 2 (ApoER2). Binds the cytoplasmic tails of LRP1 and LRP2 (Megalin). Binds the TPR motif-containing C-terminal of kinesin light chain, Klc1, pre-assembled MAPK8IP1 scaffolding complexes are then transported as a cargo of kinesin, to the required subcellular location. Interacts with the cytoplasmic domain of APP. Interacts with DCLK2. Interacts with TIAM1 and TIAM2. Interacts with FGF13; enables the interaction with MAPK13 and may regulate the MAPK8IP2 scaffolding activity. Interacts with SH3RF2. As to expression, expressed mainly in the brain and pancreas, including insulin-secreting cells. In the nervous system, more abundantly expressed in the cerebellum, pituitary gland, occipital lobe and the amygdala. Also expressed in fetal brain. Very low levels found in uterus, ovary, prostate, colon, testis, adrenal gland, thyroid gland and salivary gland.

It localises to the cytoplasm. The JNK-interacting protein (JIP) group of scaffold proteins selectively mediates JNK signaling by aggregating specific components of the MAPK cascade to form a functional JNK signaling module. JIP2 inhibits IL1 beta-induced apoptosis in insulin-secreting cells. May function as a regulator of vesicle transport, through interactions with the JNK-signaling components and motor proteins. The sequence is that of C-Jun-amino-terminal kinase-interacting protein 2 (MAPK8IP2) from Homo sapiens (Human).